The primary structure comprises 221 residues: NAD(P)H-hydrate epimerase (221 aa).

Residues 9-219 (MRELETAAVK…NIGLPKELLS (211 aa)) form the YjeF N-terminal domain. 60–64 (GNGGD) contacts (6S)-NADPHX. K(+) is bound by residues N61 and D131. Residues 135–141 (GIGFKGE), Y146, and D164 each bind (6S)-NADPHX. S167 contacts K(+).

It belongs to the NnrE/AIBP family. It depends on K(+) as a cofactor.

The catalysed reaction is (6R)-NADHX = (6S)-NADHX. The enzyme catalyses (6R)-NADPHX = (6S)-NADPHX. Its function is as follows. Catalyzes the epimerization of the S- and R-forms of NAD(P)HX, a damaged form of NAD(P)H that is a result of enzymatic or heat-dependent hydration. This is a prerequisite for the S-specific NAD(P)H-hydrate dehydratase to allow the repair of both epimers of NAD(P)HX. The protein is NAD(P)H-hydrate epimerase of Elusimicrobium minutum (strain Pei191).